Reading from the N-terminus, the 222-residue chain is MERIDGVAVGLCAHSPYLRPFTLHYRQDGVQKSWDFMKTHDSVTILMFNSSRRSLVLVKQFRPAVYAGEVERHFPGSLTAVNQDQPQELQQALPGSAGVMVELCAGIVDQPGLSLEEAACKEAWEECGYRLVPTDLRRVATYMSGVGLTSSRQTMFYAEVTDAQRGGPGGGLAEEGELIEVIHLNLDDAQAFADNPDIPKTLGVIYAISWFFSQVVPHLSLQ.

The 169-residue stretch at 38–206 (KTHDSVTILM…DIPKTLGVIY (169 aa)) folds into the Nudix hydrolase domain. A Nudix box motif is present at residues 111 to 129 (PGLSLEEAACKEAWEECGY).

This sequence belongs to the Nudix hydrolase family. Homodimer. Requires Mg(2+) as cofactor.

It is found in the cytoplasm. The catalysed reaction is UDP-sugar + H2O = UMP + alpha-D-aldose 1-phosphate.. Hydrolyzes UDP-glucose to glucose 1-phosphate and UMP and ADP-ribose to ribose 5-phosphate and AMP. The physiological substrate is probably UDP-glucose. Poor activity on other substrates such as ADP-glucose, CDP-glucose, GDP-glucose and GDP-mannose. This is Uridine diphosphate glucose pyrophosphatase NUDT14 (Nudt14) from Mus musculus (Mouse).